Reading from the N-terminus, the 292-residue chain is Elongation factor Ts (292 aa).

The involved in Mg(2+) ion dislocation from EF-Tu stretch occupies residues 79 to 82 (TDFV).

This sequence belongs to the EF-Ts family.

It is found in the cytoplasm. Associates with the EF-Tu.GDP complex and induces the exchange of GDP to GTP. It remains bound to the aminoacyl-tRNA.EF-Tu.GTP complex up to the GTP hydrolysis stage on the ribosome. The sequence is that of Elongation factor Ts (tsf) from Idiomarina loihiensis (strain ATCC BAA-735 / DSM 15497 / L2-TR).